The sequence spans 88 residues: Small ribosomal subunit protein uS17 (88 aa).

The protein belongs to the universal ribosomal protein uS17 family. In terms of assembly, part of the 30S ribosomal subunit.

Functionally, one of the primary rRNA binding proteins, it binds specifically to the 5'-end of 16S ribosomal RNA. This is Small ribosomal subunit protein uS17 from Helicobacter hepaticus (strain ATCC 51449 / 3B1).